Reading from the N-terminus, the 730-residue chain is MSDRFELYLTCPKGLESLLAEEAKGLGLDEVREHTSAIRGAADMETAYRLCVWSRLANRVLLVLKRFSMKNADDLYDGVHAVDWADHLAADGTLAVEFSGHGSGIDNTHFGALKVKDAIVDKLRNREGLRPSVEKIDPDVRVHLRLDRGEAILSLDLSGHSLHQRGYRLQQGAAPLKENLAAAVLIRAGWPRIAAEGGALADPMCGVGTFLVEAAMIAADIAPNLKRERWGFSAWLGHVPALWRKVHDEAQARAQAGLAKPPLWIRGYEADPRLIQPGRNNVERAGLGDWVKIYQGEVSTFEPRPDQNQKGLVISNPPYGERLGDEASLLYLYQNLGERLRQACMGWEAAVFTGAPQLGKRMGIRSHKQYAFWNGALPCKLLLFKVQPDQFVTGERREAQPEGTEARQQVPQASEPARLSEGAQMFANRLQKNLKQLGKWARREQIDCYRLYDADMPEYALAVDLYQDWVHVQEYAAPRSVDPDKAQARLLDALAAIPQALGISPQRVVLKRRERQSGTRQYERQATEGRFQEVNEGGVKLLVNLTDYLDTGLFLDHRPMRMRIQREAAGKRFLNLFCYTATATVHAAKGGARSTTSVDLSKTYLDWARRNLALNGYSERNRLEQSDVMTWLEGNRDSYDLIFIDPPTFSNSKRMEGVFDVQRDHVQLLDLAMARLAPGGVLYFSNNFRKFQLDEHLMARYVVEEISAQTLDPDFARNNRIHRAWRLQLR.

The THUMP domain maps to 46–157; that stretch reads TAYRLCVWSR…RGEAILSLDL (112 aa). Positions 394 to 418 are disordered; sequence GERREAQPEGTEARQQVPQASEPAR.

The protein belongs to the methyltransferase superfamily. RlmKL family.

The protein localises to the cytoplasm. It carries out the reaction guanosine(2445) in 23S rRNA + S-adenosyl-L-methionine = N(2)-methylguanosine(2445) in 23S rRNA + S-adenosyl-L-homocysteine + H(+). The catalysed reaction is guanosine(2069) in 23S rRNA + S-adenosyl-L-methionine = N(2)-methylguanosine(2069) in 23S rRNA + S-adenosyl-L-homocysteine + H(+). In terms of biological role, specifically methylates the guanine in position 2445 (m2G2445) and the guanine in position 2069 (m7G2069) of 23S rRNA. The polypeptide is Ribosomal RNA large subunit methyltransferase K/L (Pseudomonas putida (strain ATCC 47054 / DSM 6125 / CFBP 8728 / NCIMB 11950 / KT2440)).